A 175-amino-acid polypeptide reads, in one-letter code: Large ribosomal subunit protein uL10 (175 aa).

This sequence belongs to the universal ribosomal protein uL10 family. As to quaternary structure, part of the ribosomal stalk of the 50S ribosomal subunit. The N-terminus interacts with L11 and the large rRNA to form the base of the stalk. The C-terminus forms an elongated spine to which L12 dimers bind in a sequential fashion forming a multimeric L10(L12)X complex.

Functionally, forms part of the ribosomal stalk, playing a central role in the interaction of the ribosome with GTP-bound translation factors. The sequence is that of Large ribosomal subunit protein uL10 from Mycobacterium sp. (strain JLS).